Reading from the N-terminus, the 750-residue chain is Photosystem I P700 chlorophyll a apoprotein A1 (750 aa).

Transmembrane regions (helical) follow at residues 70-93 (VFSA…FHGA), 156-179 (LYCT…FHYH), 195-219 (LNHH…HVSL), 291-309 (IAHH…GHMY), 346-369 (WHAQ…HHMY), 385-411 (LSLF…IFMV), 433-455 (AIIS…LYIH), and 531-549 (FLVH…LILL). Residues C573 and C582 each contribute to the [4Fe-4S] cluster site. Transmembrane regions (helical) follow at residues 589-610 (HVFL…HFSW) and 664-686 (LSAY…MFLF). H675 lines the chlorophyll a' pocket. Residues M683 and Y691 each contribute to the chlorophyll a site. A phylloquinone-binding site is contributed by W692. Residues 724 to 744 (AVGVTHYLLGGIATTWAFFLA) traverse the membrane as a helical segment.

It belongs to the PsaA/PsaB family. As to quaternary structure, the PsaA/B heterodimer binds the P700 chlorophyll special pair and subsequent electron acceptors. PSI consists of a core antenna complex that captures photons, and an electron transfer chain that converts photonic excitation into a charge separation. The eukaryotic PSI reaction center is composed of at least 11 subunits. Requires P700 is a chlorophyll a/chlorophyll a' dimer, A0 is one or more chlorophyll a, A1 is one or both phylloquinones and FX is a shared 4Fe-4S iron-sulfur center. as cofactor.

Its subcellular location is the plastid. The protein localises to the chloroplast thylakoid membrane. It carries out the reaction reduced [plastocyanin] + hnu + oxidized [2Fe-2S]-[ferredoxin] = oxidized [plastocyanin] + reduced [2Fe-2S]-[ferredoxin]. Functionally, psaA and PsaB bind P700, the primary electron donor of photosystem I (PSI), as well as the electron acceptors A0, A1 and FX. PSI is a plastocyanin-ferredoxin oxidoreductase, converting photonic excitation into a charge separation, which transfers an electron from the donor P700 chlorophyll pair to the spectroscopically characterized acceptors A0, A1, FX, FA and FB in turn. Oxidized P700 is reduced on the lumenal side of the thylakoid membrane by plastocyanin. This Aethionema grandiflorum (Persian stone-cress) protein is Photosystem I P700 chlorophyll a apoprotein A1.